Consider the following 911-residue polypeptide: Protein translocase subunit SecA (911 aa).

Residues glutamine 87, 105-109, and aspartate 512 contribute to the ATP site; that span reads GEGKT. A disordered region spans residues 865 to 892; the sequence is AAEQDGAEEGAVATATAPVRSENKVGRN. Over residues 873–883 the composition is skewed to low complexity; that stretch reads EGAVATATAPV. Zn(2+) contacts are provided by cysteine 895, cysteine 897, cysteine 906, and histidine 907.

The protein belongs to the SecA family. In terms of assembly, monomer and homodimer. Part of the essential Sec protein translocation apparatus which comprises SecA, SecYEG and auxiliary proteins SecDF-YajC and YidC. Zn(2+) is required as a cofactor.

It localises to the cell inner membrane. It is found in the cytoplasm. The enzyme catalyses ATP + H2O + cellular proteinSide 1 = ADP + phosphate + cellular proteinSide 2.. In terms of biological role, part of the Sec protein translocase complex. Interacts with the SecYEG preprotein conducting channel. Has a central role in coupling the hydrolysis of ATP to the transfer of proteins into and across the cell membrane, serving both as a receptor for the preprotein-SecB complex and as an ATP-driven molecular motor driving the stepwise translocation of polypeptide chains across the membrane. The sequence is that of Protein translocase subunit SecA from Ectopseudomonas mendocina (strain ymp) (Pseudomonas mendocina).